A 655-amino-acid chain; its full sequence is Mannosyl-oligosaccharide 1,2-alpha-mannosidase IA (655 aa).

Residues 1–43 are Cytoplasmic-facing; that stretch reads MPVGGLLPLFSSPGGGGLGSGLGGGLGGGRKGSGPAAFRLTEK. The helical; Signal-anchor for type II membrane protein transmembrane segment at 44–64 threads the bilayer; the sequence is FVLLLVFSAFITLCFGAIFFL. Topologically, residues 65–655 are lumenal; the sequence is PDSSKLLSGV…QKKEIDGKEK (591 aa). Cys-478 and Cys-510 are oxidised to a cystine. Residue Asn-515 is glycosylated (N-linked (GlcNAc...) asparagine). Residue Glu-524 is the Proton donor of the active site. Thr-635 is a Ca(2+) binding site.

This sequence belongs to the glycosyl hydrolase 47 family. Requires Ca(2+) as cofactor. Post-translationally, N-linked glycan at Asn-515 consists of Man(6)-GlcNAc(2).

Its subcellular location is the golgi apparatus membrane. It carries out the reaction N(4)-(alpha-D-Man-(1-&gt;2)-alpha-D-Man-(1-&gt;2)-alpha-D-Man-(1-&gt;3)-[alpha-D-Man-(1-&gt;2)-alpha-D-Man-(1-&gt;3)-[alpha-D-Man-(1-&gt;2)-alpha-D-Man-(1-&gt;6)]-alpha-D-Man-(1-&gt;6)]-beta-D-Man-(1-&gt;4)-beta-D-GlcNAc-(1-&gt;4)-beta-D-GlcNAc)-L-asparaginyl-[protein] (N-glucan mannose isomer 9A1,2,3B1,2,3) + 4 H2O = N(4)-(alpha-D-Man-(1-&gt;3)-[alpha-D-Man-(1-&gt;3)-[alpha-D-Man-(1-&gt;6)]-alpha-D-Man-(1-&gt;6)]-beta-D-Man-(1-&gt;4)-beta-D-GlcNAc-(1-&gt;4)-beta-D-GlcNAc)-L-asparaginyl-[protein] (N-glucan mannose isomer 5A1,2) + 4 beta-D-mannose. The catalysed reaction is N(4)-(alpha-D-Man-(1-&gt;2)-alpha-D-Man-(1-&gt;2)-alpha-D-Man-(1-&gt;3)-[alpha-D-Man-(1-&gt;3)-[alpha-D-Man-(1-&gt;2)-alpha-D-Man-(1-&gt;6)]-alpha-D-Man-(1-&gt;6)]-beta-D-Man-(1-&gt;4)-beta-D-GlcNAc-(1-&gt;4)-beta-D-GlcNAc)-L-asparaginyl-[protein] (N-glucan mannose isomer 8A1,2,3B1,3) + 3 H2O = N(4)-(alpha-D-Man-(1-&gt;3)-[alpha-D-Man-(1-&gt;3)-[alpha-D-Man-(1-&gt;6)]-alpha-D-Man-(1-&gt;6)]-beta-D-Man-(1-&gt;4)-beta-D-GlcNAc-(1-&gt;4)-beta-D-GlcNAc)-L-asparaginyl-[protein] (N-glucan mannose isomer 5A1,2) + 3 beta-D-mannose. It participates in protein modification; protein glycosylation. Its activity is regulated as follows. Inhibited by both 1-deoxymannojirimycin and kifunensine. In terms of biological role, involved in the maturation of Asn-linked oligosaccharides. Progressively trim alpha-1,2-linked mannose residues from Man(9)GlcNAc(2) to produce Man(5)GlcNAc(2). The chain is Mannosyl-oligosaccharide 1,2-alpha-mannosidase IA (Man1a1) from Mus musculus (Mouse).